A 411-amino-acid chain; its full sequence is CCA-adding enzyme (411 aa).

Residues G8 and R11 each coordinate ATP. CTP contacts are provided by G8 and R11. Positions 21 and 23 each coordinate Mg(2+). Positions 91, 137, and 140 each coordinate ATP. CTP-binding residues include R91, R137, and R140. Residues 227–328 (LGNQTMTRLS…MTIFQAFDCW (102 aa)) form the HD domain.

It belongs to the tRNA nucleotidyltransferase/poly(A) polymerase family. Bacterial CCA-adding enzyme type 2 subfamily. The cofactor is Mg(2+).

It carries out the reaction a tRNA precursor + 2 CTP + ATP = a tRNA with a 3' CCA end + 3 diphosphate. The catalysed reaction is a tRNA with a 3' CCA end + 2 CTP + ATP = a tRNA with a 3' CCACCA end + 3 diphosphate. Functionally, catalyzes the addition and repair of the essential 3'-terminal CCA sequence in tRNAs without using a nucleic acid template. Adds these three nucleotides in the order of C, C, and A to the tRNA nucleotide-73, using CTP and ATP as substrates and producing inorganic pyrophosphate. tRNA 3'-terminal CCA addition is required both for tRNA processing and repair. Also involved in tRNA surveillance by mediating tandem CCA addition to generate a CCACCA at the 3' terminus of unstable tRNAs. While stable tRNAs receive only 3'-terminal CCA, unstable tRNAs are marked with CCACCA and rapidly degraded. This Blochmanniella floridana protein is CCA-adding enzyme.